The sequence spans 302 residues: Recombination-associated protein RdgC (302 aa).

The protein belongs to the RdgC family.

Its subcellular location is the cytoplasm. The protein resides in the nucleoid. In terms of biological role, may be involved in recombination. This chain is Recombination-associated protein RdgC, found in Actinobacillus pleuropneumoniae serotype 5b (strain L20).